The chain runs to 614 residues: Jacalin-related lectin 14 (614 aa).

Jacalin-type lectin domains lie at 27 to 169, 172 to 314, 317 to 462, and 468 to 611; these read VQKM…YFSW, PRKM…YFTT, PTKS…YFSP, and AEKL…HVVP.

This sequence belongs to the jacalin lectin family.

The chain is Jacalin-related lectin 14 (JAL14) from Arabidopsis thaliana (Mouse-ear cress).